The sequence spans 206 residues: Large ribosomal subunit protein mL40 (206 aa).

Residues 1–46 (MTASVLRSISLALRPTSGLLGTWQTQLRETHQRASLLSFWELIPMR) constitute a mitochondrion transit peptide. The segment at 168-192 (LFPFEKEGPHYTPPIPNYQPPEGRY) is disordered.

Belongs to the mitochondrion-specific ribosomal protein mL40 family. As to quaternary structure, component of the mitochondrial large ribosomal subunit (mt-LSU). Mature mammalian 55S mitochondrial ribosomes consist of a small (28S) and a large (39S) subunit. The 28S small subunit contains a 12S ribosomal RNA (12S mt-rRNA) and 30 different proteins. The 39S large subunit contains a 16S rRNA (16S mt-rRNA), a copy of mitochondrial valine transfer RNA (mt-tRNA(Val)), which plays an integral structural role, and 52 different proteins. mL40 binds to the major groove of the anticodon stem of mt-tRNA(Val) in the central protuberance. Ubiquitous.

It is found in the mitochondrion. The sequence is that of Large ribosomal subunit protein mL40 (MRPL40) from Homo sapiens (Human).